Reading from the N-terminus, the 121-residue chain is MSITKDQILEALAAMSVMEVVELIEAMEEKFGVSAAAAVVSGGSDAAAAEEKTEFDVVLTSHGDNKVAVIKALRAATGLGLKEAKGMAESAPVAVKEAISKEEAEALKADLEAAGAAVEIK.

Belongs to the bacterial ribosomal protein bL12 family. Homodimer. Part of the ribosomal stalk of the 50S ribosomal subunit. Forms a multimeric L10(L12)X complex, where L10 forms an elongated spine to which 2 to 4 L12 dimers bind in a sequential fashion. Binds GTP-bound translation factors.

Its function is as follows. Forms part of the ribosomal stalk which helps the ribosome interact with GTP-bound translation factors. Is thus essential for accurate translation. The sequence is that of Large ribosomal subunit protein bL12 from Shewanella pealeana (strain ATCC 700345 / ANG-SQ1).